The following is a 548-amino-acid chain: Membrane protein insertase YidC (548 aa).

5 helical membrane passes run 6-26, 357-377, 424-444, 455-475, and 503-523; these read NLIL…WESD, NWGV…FPLT, LGGC…YWAL, FALW…PILM, and PIIF…YWLV.

This sequence belongs to the OXA1/ALB3/YidC family. Type 1 subfamily. Interacts with the Sec translocase complex via SecD. Specifically interacts with transmembrane segments of nascent integral membrane proteins during membrane integration.

It localises to the cell inner membrane. In terms of biological role, required for the insertion and/or proper folding and/or complex formation of integral membrane proteins into the membrane. Involved in integration of membrane proteins that insert both dependently and independently of the Sec translocase complex, as well as at least some lipoproteins. Aids folding of multispanning membrane proteins. The sequence is that of Membrane protein insertase YidC from Aeromonas hydrophila subsp. hydrophila (strain ATCC 7966 / DSM 30187 / BCRC 13018 / CCUG 14551 / JCM 1027 / KCTC 2358 / NCIMB 9240 / NCTC 8049).